Reading from the N-terminus, the 212-residue chain is Soluble inorganic pyrophosphatase 1 (212 aa).

Substrate-binding residues include lysine 62 and arginine 76. Residue tyrosine 84 is the Proton donor of the active site. Tyrosine 88 provides a ligand contact to substrate. Mg(2+)-binding residues include aspartate 98, aspartate 103, and aspartate 135. Substrate is bound at residue tyrosine 172.

It belongs to the PPase family. As to quaternary structure, monomer. It depends on Mg(2+) as a cofactor. In terms of tissue distribution, ubiquitous. Lower level of expression in ovary, stigma and pollen.

Its subcellular location is the cytoplasm. It catalyses the reaction diphosphate + H2O = 2 phosphate + H(+). Inhibited by Zn(2+), Ca(2+), Ba(2+), Fe(2+), Co(2+), Cu(2+), Eu(2+), Eu(3+) and Mn(2+). Its function is as follows. Catalyzes the irreversible hydrolysis of pyrophosphate (PPi) to phosphate. The MgPPi(2-) complex binds to the enzyme only after a free Mg(2+) ion has bound. No activity with glycerol-3-phosphate, glucose-6-phosphate, p-nitrophenylphosphate, ADP, NADP(+), NAD(+),NADH, NADPH or phosphoribosyl pyrophosphate as substrates. Controls the equilibrium of gluconeogenic reactions in the heterotrophic growth phase of early seedling establishment. Determinates the rate of cytosolic glycolysis, providing carbon for seed storage lipid accumulation. The sequence is that of Soluble inorganic pyrophosphatase 1 from Arabidopsis thaliana (Mouse-ear cress).